We begin with the raw amino-acid sequence, 486 residues long: Cardiolipin synthase A (486 aa).

The next 2 membrane-spanning stretches (helical) occupy residues T3–V23 and M38–V58. 2 consecutive PLD phosphodiesterase domains span residues M219 to R246 and E399 to S426. Active-site residues include H224, K226, D231, H404, K406, and D411.

This sequence belongs to the phospholipase D family. Cardiolipin synthase subfamily. ClsA sub-subfamily.

Its subcellular location is the cell inner membrane. It catalyses the reaction 2 a 1,2-diacyl-sn-glycero-3-phospho-(1'-sn-glycerol) = a cardiolipin + glycerol. Functionally, catalyzes the reversible phosphatidyl group transfer from one phosphatidylglycerol molecule to another to form cardiolipin (CL) (diphosphatidylglycerol) and glycerol. The chain is Cardiolipin synthase A from Salmonella gallinarum (strain 287/91 / NCTC 13346).